The following is a 740-amino-acid chain: Phosphoribosylformylglycinamidine synthase subunit PurL (740 aa).

The active site involves His-53. Positions 56 and 95 each coordinate ATP. Mg(2+) is bound at residue Glu-97. Residues 98 to 101 (SHNH) and Arg-120 contribute to the substrate site. His-99 acts as the Proton acceptor in catalysis. Asp-121 lines the Mg(2+) pocket. Substrate is bound at residue Gln-244. Position 274 (Asp-274) interacts with Mg(2+). Position 318-320 (318-320 (ESQ)) interacts with substrate. The ATP site is built by Asp-501 and Gly-538. Mg(2+) is bound at residue Asn-539. Position 541 (Ser-541) interacts with substrate.

This sequence belongs to the FGAMS family. As to quaternary structure, monomer. Part of the FGAM synthase complex composed of 1 PurL, 1 PurQ and 2 PurS subunits.

The protein resides in the cytoplasm. It carries out the reaction N(2)-formyl-N(1)-(5-phospho-beta-D-ribosyl)glycinamide + L-glutamine + ATP + H2O = 2-formamido-N(1)-(5-O-phospho-beta-D-ribosyl)acetamidine + L-glutamate + ADP + phosphate + H(+). The protein operates within purine metabolism; IMP biosynthesis via de novo pathway; 5-amino-1-(5-phospho-D-ribosyl)imidazole from N(2)-formyl-N(1)-(5-phospho-D-ribosyl)glycinamide: step 1/2. Part of the phosphoribosylformylglycinamidine synthase complex involved in the purines biosynthetic pathway. Catalyzes the ATP-dependent conversion of formylglycinamide ribonucleotide (FGAR) and glutamine to yield formylglycinamidine ribonucleotide (FGAM) and glutamate. The FGAM synthase complex is composed of three subunits. PurQ produces an ammonia molecule by converting glutamine to glutamate. PurL transfers the ammonia molecule to FGAR to form FGAM in an ATP-dependent manner. PurS interacts with PurQ and PurL and is thought to assist in the transfer of the ammonia molecule from PurQ to PurL. This chain is Phosphoribosylformylglycinamidine synthase subunit PurL, found in Lactobacillus delbrueckii subsp. bulgaricus (strain ATCC 11842 / DSM 20081 / BCRC 10696 / JCM 1002 / NBRC 13953 / NCIMB 11778 / NCTC 12712 / WDCM 00102 / Lb 14).